The chain runs to 79 residues: UPF0337 protein YhjA (79 aa).

The interval 1 to 30 (MALNDKLDATKDKVSGKVKETTGKVTGDEK) is disordered.

It belongs to the UPF0337 (CsbD) family.

The chain is UPF0337 protein YhjA (yhjA) from Lactococcus lactis subsp. lactis (strain IL1403) (Streptococcus lactis).